A 250-amino-acid polypeptide reads, in one-letter code: F-box only protein 17 (250 aa).

Residues 15–62 (HMALAELPPELLLQVLSHVPPRALVTRCRPVCRAWRDLVDGPSVWLLQ) form the F-box domain. The region spanning 99 to 250 (FCLLAPLGRN…GLLQGLSRLH (152 aa)) is the FBA domain.

Part of a SCF (SKP1-cullin-F-box) protein ligase complex. Interacts with SKP1 and CUL1.

Its function is as follows. Substrate-recognition component of the SCF (SKP1-CUL1-F-box protein)-type E3 ubiquitin ligase complex. Able to recognize and bind denatured glycoproteins, which are modified with complex-type oligosaccharides. Also recognizes sulfated glycans. Does not bind high-mannose glycoproteins. This Rattus norvegicus (Rat) protein is F-box only protein 17 (Fbxo17).